The sequence spans 476 residues: UDP-glucose 6-dehydrogenase (476 aa).

Residues Gly-7 to Gly-12, Asp-32, Arg-37, Val-85 to Thr-89, Ser-126 to Thr-127, and Glu-161 each bind NAD(+). Residues Glu-157–Glu-161, Lys-216–Asn-220, Arg-256, and Gln-263–Gly-269 contribute to the substrate site. Cys-272 serves as the catalytic Nucleophile. Cys-272–Lys-275 provides a ligand contact to NAD(+). Residue Phe-334–Lys-335 coordinates substrate. Residue Arg-342 participates in NAD(+) binding. Substrate is bound at residue Arg-439.

This sequence belongs to the UDP-glucose/GDP-mannose dehydrogenase family.

The catalysed reaction is UDP-alpha-D-glucose + 2 NAD(+) + H2O = UDP-alpha-D-glucuronate + 2 NADH + 3 H(+). The protein operates within nucleotide-sugar biosynthesis; UDP-alpha-D-glucuronate biosynthesis; UDP-alpha-D-glucuronate from UDP-alpha-D-glucose: step 1/1. In terms of biological role, involved in the biosynthesis of glycosaminoglycans; hyaluronan, chondroitin sulfate and heparan sulfate. Required for wingless signaling in different tissues. This Drosophila melanogaster (Fruit fly) protein is UDP-glucose 6-dehydrogenase (sgl).